A 325-amino-acid chain; its full sequence is Transaldolase (325 aa).

K125 serves as the catalytic Schiff-base intermediate with substrate.

This sequence belongs to the transaldolase family. Type 2 subfamily.

The protein localises to the cytoplasm. It carries out the reaction D-sedoheptulose 7-phosphate + D-glyceraldehyde 3-phosphate = D-erythrose 4-phosphate + beta-D-fructose 6-phosphate. It functions in the pathway carbohydrate degradation; pentose phosphate pathway; D-glyceraldehyde 3-phosphate and beta-D-fructose 6-phosphate from D-ribose 5-phosphate and D-xylulose 5-phosphate (non-oxidative stage): step 2/3. Functionally, transaldolase is important for the balance of metabolites in the pentose-phosphate pathway. The polypeptide is Transaldolase (Campylobacter jejuni subsp. doylei (strain ATCC BAA-1458 / RM4099 / 269.97)).